Here is a 349-residue protein sequence, read N- to C-terminus: Very-long-chain 3-oxoacyl-CoA reductase (349 aa).

Residues 29-49 (AASLVFATGGLFLLSRGLSFL) form a helical membrane-spanning segment. Residues Leu-74, Asp-129, Asp-137, Asn-156, Tyr-223, Lys-227, Val-256, and Ser-258 each contribute to the NADP(+) site. Tyr-223 acts as the Proton donor in catalysis. Residue Lys-227 is the Lowers pKa of active site Tyr of the active site.

This sequence belongs to the short-chain dehydrogenases/reductases (SDR) family.

It localises to the endoplasmic reticulum membrane. It catalyses the reaction a very-long-chain (3R)-3-hydroxyacyl-CoA + NADP(+) = a very-long-chain 3-oxoacyl-CoA + NADPH + H(+). It functions in the pathway lipid metabolism; fatty acid biosynthesis. Its function is as follows. Component of the microsomal membrane bound fatty acid elongation system, which produces the 26-carbon very long-chain fatty acids (VLCFA) from palmitate. Catalyzes the reduction of the 3-ketoacyl-CoA intermediate that is formed in each cycle of fatty acid elongation. VLCFAs serve as precursors for ceramide and sphingolipids. This is Very-long-chain 3-oxoacyl-CoA reductase from Coccidioides immitis (strain RS) (Valley fever fungus).